We begin with the raw amino-acid sequence, 361 residues long: MSLPHLAPEMALLERPLIDVRAPVEFARGALPGAVNLPLMDDAERHAVGIRYKEAGQGAAIALGERLVDGDLKARRVAAWRAFAERHPDAVIYCFRGGLRSRIAQQWLQEAGITLPRIQGGWKAMRQCVNAEIEAAAARPVLVVAGLTGCAKTELVQSLDVGIDLEGHARHKGSAFGRHPLQGPSQIDFEHALGAALSHATHGCVVEDESRMIGQLDIPLSFWQTMETAPRIRVEMPLDWRLEQIRKDYIDTLWRTYRDHYGEWLGWSLMRKQLSSALKRVRKRLGSARFQRLQRLQALAFREHQRGNTQAHEAWLAPLMLEYYDPMYRYQLEQSPYEALHVGDWESCLAFARDWSAALPR.

Residues 11–134 (ALLERPLIDV…MRQCVNAEIE (124 aa)) form the Rhodanese domain. The active-site S-selanylcysteine intermediate is the cysteine 94.

This sequence belongs to the SelU family. In terms of assembly, monomer.

The catalysed reaction is 5-methylaminomethyl-2-thiouridine(34) in tRNA + selenophosphate + (2E)-geranyl diphosphate + H2O + H(+) = 5-methylaminomethyl-2-selenouridine(34) in tRNA + (2E)-thiogeraniol + phosphate + diphosphate. It catalyses the reaction 5-methylaminomethyl-2-thiouridine(34) in tRNA + (2E)-geranyl diphosphate = 5-methylaminomethyl-S-(2E)-geranyl-thiouridine(34) in tRNA + diphosphate. It carries out the reaction 5-methylaminomethyl-S-(2E)-geranyl-thiouridine(34) in tRNA + selenophosphate + H(+) = 5-methylaminomethyl-2-(Se-phospho)selenouridine(34) in tRNA + (2E)-thiogeraniol. The enzyme catalyses 5-methylaminomethyl-2-(Se-phospho)selenouridine(34) in tRNA + H2O = 5-methylaminomethyl-2-selenouridine(34) in tRNA + phosphate. Its function is as follows. Involved in the post-transcriptional modification of the uridine at the wobble position (U34) of tRNA(Lys), tRNA(Glu) and tRNA(Gln). Catalyzes the conversion of 2-thiouridine (S2U-RNA) to 2-selenouridine (Se2U-RNA). Acts in a two-step process involving geranylation of 2-thiouridine (S2U) to S-geranyl-2-thiouridine (geS2U) and subsequent selenation of the latter derivative to 2-selenouridine (Se2U) in the tRNA chain. The sequence is that of tRNA 2-selenouridine synthase from Chromohalobacter salexigens (strain ATCC BAA-138 / DSM 3043 / CIP 106854 / NCIMB 13768 / 1H11).